The sequence spans 690 residues: DNA topoisomerase 1 (690 aa).

Residues 3-121 form the Toprim domain; sequence DYLVIVESPA…EITKQAIKDA (119 aa). Residues Glu-9 and Asp-82 each contribute to the Mg(2+) site. The Topo IA-type catalytic domain maps to 129-558; it reads NMDLVDAQQA…DFYKGFEERL (430 aa). An interaction with DNA region spans residues 163–168; it reads SAGRVQ. The O-(5'-phospho-DNA)-tyrosine intermediate role is filled by Tyr-298. The disordered stretch occupies residues 329–354; that stretch reads NGTKAVKKDKKSQDAHEAIRPTSVER. Positions 339 to 354 are enriched in basic and acidic residues; the sequence is KSQDAHEAIRPTSVER. C4-type zinc fingers lie at residues 579 to 605, 619 to 647, and 660 to 683; these read CEKC…FPDC, CPKC…YPEC, and CPKC…CSSC.

This sequence belongs to the type IA topoisomerase family. Monomer. It depends on Mg(2+) as a cofactor.

The catalysed reaction is ATP-independent breakage of single-stranded DNA, followed by passage and rejoining.. Functionally, releases the supercoiling and torsional tension of DNA, which is introduced during the DNA replication and transcription, by transiently cleaving and rejoining one strand of the DNA duplex. Introduces a single-strand break via transesterification at a target site in duplex DNA. The scissile phosphodiester is attacked by the catalytic tyrosine of the enzyme, resulting in the formation of a DNA-(5'-phosphotyrosyl)-enzyme intermediate and the expulsion of a 3'-OH DNA strand. The free DNA strand then undergoes passage around the unbroken strand, thus removing DNA supercoils. Finally, in the religation step, the DNA 3'-OH attacks the covalent intermediate to expel the active-site tyrosine and restore the DNA phosphodiester backbone. This Halalkalibacterium halodurans (strain ATCC BAA-125 / DSM 18197 / FERM 7344 / JCM 9153 / C-125) (Bacillus halodurans) protein is DNA topoisomerase 1.